Reading from the N-terminus, the 140-residue chain is Large-conductance mechanosensitive channel (140 aa).

The next 2 helical transmembrane spans lie at V16–L36 and I84–I104.

This sequence belongs to the MscL family. Homopentamer.

Its subcellular location is the cell inner membrane. Channel that opens in response to stretch forces in the membrane lipid bilayer. May participate in the regulation of osmotic pressure changes within the cell. In Xanthomonas oryzae pv. oryzae (strain PXO99A), this protein is Large-conductance mechanosensitive channel.